A 1328-amino-acid polypeptide reads, in one-letter code: 5'-3' exoribonuclease 1 (1328 aa).

The tract at residues 1211-1328 (AGKNRKTNVS…VQPMGKLQIN (118 aa)) is disordered. Positions 1217-1231 (TNVSANNVSQGTDSR) are enriched in polar residues. The segment covering 1275–1286 (HKSKSKFSKGNH) has biased composition (basic residues).

Belongs to the 5'-3' exonuclease family. Monomer. Mg(2+) is required as a cofactor.

Its subcellular location is the cytoplasm. It is found in the perinuclear region. The protein localises to the P-body. With respect to regulation, strand exchange activity is enhanced by fatty acid synthase (stimulatory factor P190/210). Multifunctional protein that exhibits several independent functions at different levels of the cellular processes. 5'-3' exonuclease component of the nonsense-mediated mRNA decay (NMD) which is a highly conserved mRNA degradation pathway, an RNA surveillance system whose role is to identify and rid cells of mRNA with premature termination codons and thus prevents accumulation of potentially harmful truncated proteins. Involved in the degradation of several hypomodified mature tRNA species and participates in the 5'-processing or the degradation of the snoRNA precursors and rRNA processing. The protein is 5'-3' exoribonuclease 1 (exo2) of Schizosaccharomyces pombe (strain 972 / ATCC 24843) (Fission yeast).